The sequence spans 124 residues: Probable cytochrome b5 1 (124 aa).

The Cytochrome b5 heme-binding domain occupies 3 to 79 (VKYFEPEEIV…LEEMYIGDLK (77 aa)). 2 residues coordinate heme: H38 and H62. A helical transmembrane segment spans residues 100–120 (PPLPLLIALIVLPAIAVIVFV).

The protein belongs to the cytochrome b5 family.

The protein resides in the endoplasmic reticulum membrane. Its subcellular location is the microsome membrane. In terms of biological role, membrane bound hemoprotein which function as an electron carrier for several membrane bound oxygenases. The sequence is that of Probable cytochrome b5 1 from Schizosaccharomyces pombe (strain 972 / ATCC 24843) (Fission yeast).